Consider the following 255-residue polypeptide: MLPTYERFSDPKSVLFRLPFARLALVALSLPLGGFFFCVIWSLTFDFVRSTYTHCDVTNYLPSVSAAIGNYEPQKTVWRLAIFLHLPLRLAVAKIYLEHYREHIRRSRRLLGILACFLNVVEDLALFCLSFWTSADHYETHRNAFVVFIACSECYMLVSYLLNRNIQKTVLLPHEEKSLRYKRNLFLVNVIAFGLAGYCFVRHNSHCEAGVYTFFALFEYIVVLTNMGFHMTSYWDFYALNVVCDAKHGLYLSQS.

The next 5 membrane-spanning stretches (helical) occupy residues 23-43 (LALV…IWSL), 111-131 (LGIL…CLSF), 143-163 (NAFV…YLLN), 185-205 (LFLV…RHNS), and 209-229 (AGVY…NMGF).

It belongs to the PGAP2 family.

It is found in the golgi apparatus membrane. The protein localises to the endoplasmic reticulum membrane. Functionally, involved in the lipid remodeling steps of GPI-anchor maturation. Required for stable expression of GPI-anchored proteins at the cell surface. In Drosophila melanogaster (Fruit fly), this protein is Post-GPI attachment to proteins factor 2.